A 158-amino-acid chain; its full sequence is Transcription elongation factor GreA (158 aa).

Residues 5 to 75 (EKLPMLAEGY…DLEDRVSRAQ (71 aa)) adopt a coiled-coil conformation.

The protein belongs to the GreA/GreB family.

In terms of biological role, necessary for efficient RNA polymerase transcription elongation past template-encoded arresting sites. The arresting sites in DNA have the property of trapping a certain fraction of elongating RNA polymerases that pass through, resulting in locked ternary complexes. Cleavage of the nascent transcript by cleavage factors such as GreA or GreB allows the resumption of elongation from the new 3'terminus. GreA releases sequences of 2 to 3 nucleotides. This Novosphingobium aromaticivorans (strain ATCC 700278 / DSM 12444 / CCUG 56034 / CIP 105152 / NBRC 16084 / F199) protein is Transcription elongation factor GreA.